Reading from the N-terminus, the 107-residue chain is Putative double-stranded DNA mimic protein PC1_1990 (107 aa).

The protein belongs to the putative dsDNA mimic protein family.

Its function is as follows. May act as a double-stranded DNA (dsDNA) mimic. Probably regulates the activity of a dsDNA-binding protein. The chain is Putative double-stranded DNA mimic protein PC1_1990 from Pectobacterium carotovorum subsp. carotovorum (strain PC1).